We begin with the raw amino-acid sequence, 392 residues long: Phospho-N-acetylmuramoyl-pentapeptide-transferase (392 aa).

Helical transmembrane passes span 24–44 (YLTM…LLAG), 76–96 (TMGG…WFDL), 100–120 (FVWI…VDDW), 137–157 (YFWQ…CISE), 170–190 (WVQS…VPFF), 193–213 (VSYP…IVGA), 225–245 (GLAI…AYVT), 262–282 (SGEL…FLWF), 289–309 (VFMG…IAVI), 314–334 (IVLA…MLQV), and 369–389 (QVVI…LSTL).

This sequence belongs to the glycosyltransferase 4 family. MraY subfamily. Mg(2+) is required as a cofactor.

It is found in the cell inner membrane. The catalysed reaction is UDP-N-acetyl-alpha-D-muramoyl-L-alanyl-gamma-D-glutamyl-meso-2,6-diaminopimeloyl-D-alanyl-D-alanine + di-trans,octa-cis-undecaprenyl phosphate = di-trans,octa-cis-undecaprenyl diphospho-N-acetyl-alpha-D-muramoyl-L-alanyl-D-glutamyl-meso-2,6-diaminopimeloyl-D-alanyl-D-alanine + UMP. It participates in cell wall biogenesis; peptidoglycan biosynthesis. Catalyzes the initial step of the lipid cycle reactions in the biosynthesis of the cell wall peptidoglycan: transfers peptidoglycan precursor phospho-MurNAc-pentapeptide from UDP-MurNAc-pentapeptide onto the lipid carrier undecaprenyl phosphate, yielding undecaprenyl-pyrophosphoryl-MurNAc-pentapeptide, known as lipid I. This is Phospho-N-acetylmuramoyl-pentapeptide-transferase from Delftia acidovorans (strain DSM 14801 / SPH-1).